Reading from the N-terminus, the 235-residue chain is Kinetochore protein Spc25 (235 aa).

The stretch at 44–106 (KNILSAKEAI…DMEAQLLRHT (63 aa)) forms a coiled coil. The disordered stretch occupies residues 193 to 216 (EVAGASPVTPSGSERPKATSKHSN).

It belongs to the SPC25 family. As to quaternary structure, component of the Ndc80 complex, which is composed of Ndc80, Nuf2 and Spc25.

The protein resides in the nucleus. It localises to the chromosome. Its subcellular location is the centromere. It is found in the kinetochore. Its function is as follows. Acts as a component of the essential kinetochore-associated Ndc80 complex, which is required for chromosome segregation and spindle checkpoint activity during meiosis and mitosis. Required for kinetochore integrity and the organization of stable microtubule binding sites in the outer plate of the kinetochore. Participates in SAC signaling that responds specifically to disruptions in spindle microtubule dynamics. The NDC80 complex synergistically enhances the affinity of the SKA1 complex for microtubules and may allow the NDC80 complex to track depolymerizing microtubules. This chain is Kinetochore protein Spc25, found in Drosophila pseudoobscura pseudoobscura (Fruit fly).